Consider the following 218-residue polypeptide: ATP-dependent Clp protease proteolytic subunit 2 (218 aa).

Ser-114 functions as the Nucleophile in the catalytic mechanism. Residue His-139 is part of the active site.

Belongs to the peptidase S14 family. As to quaternary structure, fourteen ClpP subunits assemble into 2 heptameric rings which stack back to back to give a disk-like structure with a central cavity, resembling the structure of eukaryotic proteasomes.

It is found in the cytoplasm. It catalyses the reaction Hydrolysis of proteins to small peptides in the presence of ATP and magnesium. alpha-casein is the usual test substrate. In the absence of ATP, only oligopeptides shorter than five residues are hydrolyzed (such as succinyl-Leu-Tyr-|-NHMec, and Leu-Tyr-Leu-|-Tyr-Trp, in which cleavage of the -Tyr-|-Leu- and -Tyr-|-Trp bonds also occurs).. Its function is as follows. Cleaves peptides in various proteins in a process that requires ATP hydrolysis. Has a chymotrypsin-like activity. Plays a major role in the degradation of misfolded proteins. Probably partially responsible for degradation of ECF sigma factor SigR prime. The protein is ATP-dependent Clp protease proteolytic subunit 2 of Streptomyces coelicolor (strain ATCC BAA-471 / A3(2) / M145).